The sequence spans 378 residues: 7-methylxanthine methyltransferase 1 (378 aa).

Residues Tyr-18, Cys-61, Asn-66, Asp-100, Leu-101, Ser-139, Phe-140, and Cys-156 each coordinate S-adenosyl-L-homocysteine. Residues Tyr-157, His-160, and Trp-161 each contribute to the theobromine site. 4 residues coordinate Mg(2+): Asn-178, Asp-260, Phe-262, and Asn-263. Tyr-362 is a binding site for theobromine.

The protein belongs to the methyltransferase superfamily. Type-7 methyltransferase family. Requires Mg(2+) as cofactor. Mainly expressed, at low levels, in leaves and fruits (grains). Also present, at lower levels, in roots, stamens and pistils.

The protein localises to the cytoplasm. It carries out the reaction 7-methylxanthine + S-adenosyl-L-methionine = theobromine + S-adenosyl-L-homocysteine + H(+). It participates in alkaloid biosynthesis. In terms of biological role, involved in the biosynthesis of caffeine. Catalyzes the conversion of 7-methylxanthine (7mX) to theobromine and of paraxanthine to caffeine. The chain is 7-methylxanthine methyltransferase 1 from Coffea canephora (Robusta coffee).